Here is a 315-residue protein sequence, read N- to C-terminus: 10-epi-cubebol synthase (315 aa).

Residues Asp-79, Asn-220, Ser-224, and Glu-228 each contribute to the Mg(2+) site. The DDXXD motif motif lies at 79 to 83 (DDVCE). An NXXXSXXXE motif motif is present at residues 220–228 (NDIYSLRKE).

The protein belongs to the terpene synthase family. Requires Mg(2+) as cofactor.

It carries out the reaction (2E,6E)-farnesyl diphosphate + H2O = 10-epi-cubebol + diphosphate. Functionally, catalyzes the cyclization of farnesyl diphosphate (FPP) to 10-epi-cubebol. Is also responsible for the formation of many other sesquiterpenes, mainly cadalanes and cubebanes, including 1,10-di-epi-cubebol and the cadalanes delta-cadinene, T-cadinol and alpha-cadinol. The protein is 10-epi-cubebol synthase of Sorangium cellulosum (strain So ce56) (Polyangium cellulosum (strain So ce56)).